A 399-amino-acid polypeptide reads, in one-letter code: Acetate kinase (399 aa).

Asparagine 7 serves as a coordination point for Mg(2+). Lysine 14 provides a ligand contact to ATP. Arginine 91 is a binding site for substrate. Aspartate 148 (proton donor/acceptor) is an active-site residue. ATP contacts are provided by residues histidine 208–glycine 212, aspartate 283–arginine 285, and glycine 331–asparagine 335. Position 384 (glutamate 384) interacts with Mg(2+).

This sequence belongs to the acetokinase family. In terms of assembly, homodimer. It depends on Mg(2+) as a cofactor. Mn(2+) serves as cofactor.

Its subcellular location is the cytoplasm. The enzyme catalyses acetate + ATP = acetyl phosphate + ADP. Its pathway is metabolic intermediate biosynthesis; acetyl-CoA biosynthesis; acetyl-CoA from acetate: step 1/2. Catalyzes the formation of acetyl phosphate from acetate and ATP. Can also catalyze the reverse reaction. The sequence is that of Acetate kinase from Desulfitobacterium hafniense (strain DSM 10664 / DCB-2).